A 295-amino-acid polypeptide reads, in one-letter code: Urease accessory protein UreD (295 aa).

This sequence belongs to the UreD family. UreD, UreF and UreG form a complex that acts as a GTP-hydrolysis-dependent molecular chaperone, activating the urease apoprotein by helping to assemble the nickel containing metallocenter of UreC. The UreE protein probably delivers the nickel.

It is found in the cytoplasm. Its function is as follows. Required for maturation of urease via the functional incorporation of the urease nickel metallocenter. The protein is Urease accessory protein UreD of Ralstonia nicotianae (strain ATCC BAA-1114 / GMI1000) (Ralstonia solanacearum).